We begin with the raw amino-acid sequence, 221 residues long: 2-amino-5-formylamino-6-ribosylaminopyrimidin-4(3H)-one 5'-monophosphate deformylase (221 aa).

Residues glutamate 29, histidine 31, aspartate 40, and histidine 108 each contribute to the Fe cation site.

Belongs to the creatininase superfamily. FAPy deformylase family. In terms of assembly, homodimer. It depends on Fe(2+) as a cofactor. Zn(2+) is required as a cofactor.

The enzyme catalyses 2-amino-5-formylamino-6-(5-phospho-D-ribosylamino)pyrimidin-4(3H)-one + H2O = 2,5-diamino-6-(1-D-ribosylamino)pyrimidin-4(3H)-one 5'-phosphate + formate + H(+). It participates in cofactor biosynthesis; coenzyme F420 biosynthesis. It functions in the pathway cofactor biosynthesis; riboflavin biosynthesis. In terms of biological role, catalyzes the hydrolysis of the formamide of 2-amino-5-formylamino-6-ribosylamino-4(3H)-pyrimidinone 5'-monophosphate (FAPy) to form 2,5-diamino-6-ribosylamino-4(3H)-pyrimidinone 5'-phosphate (APy). In Methanococcus maripaludis (strain DSM 14266 / JCM 13030 / NBRC 101832 / S2 / LL), this protein is 2-amino-5-formylamino-6-ribosylaminopyrimidin-4(3H)-one 5'-monophosphate deformylase.